The chain runs to 531 residues: Jacalin-related lectin 16 (531 aa).

Jacalin-type lectin domains lie at 1–87 (MDRS…YFTW), 90–232 (PTKM…YFTT), 235–378 (LISL…YFRP), and 385–528 (TEKV…NVLP).

Belongs to the jacalin lectin family.

In Arabidopsis thaliana (Mouse-ear cress), this protein is Jacalin-related lectin 16 (JAL16).